Here is a 461-residue protein sequence, read N- to C-terminus: Acetylcholine receptor subunit alpha (461 aa).

The first 24 residues, 1–24, serve as a signal peptide directing secretion; it reads MILCSYWHVGLVLLLFSCCGLVLG. The Extracellular segment spans residues 25-234; that stretch reads SEHETRLVAN…ITYHFIMQRI (210 aa). Cystine bridges form between Cys152–Cys166 and Cys216–Cys217. Residue Asn165 is glycosylated (N-linked (GlcNAc...) asparagine). Transmembrane regions (helical) follow at residues 235-259, 267-285, and 301-320; these read PLYFVVNVIIPCLLFSFLTVLVFYL, MTLSISVLLSLTVFLLVIV, and YMLFTMIFVISSIIVTVVVI. The Cytoplasmic portion of the chain corresponds to 321–432; it reads NTHHRSPSTH…WKYVAMVIDH (112 aa). The chain crosses the membrane as a helical span at residues 433-451; it reads ILLCVFMLICIIGTVSVFA.

This sequence belongs to the ligand-gated ion channel (TC 1.A.9) family. Acetylcholine receptor (TC 1.A.9.1) subfamily. Alpha-1/CHRNA1 sub-subfamily. Pentamer of two alpha chains, and one each of the beta, delta, and gamma chains.

It localises to the postsynaptic cell membrane. Its subcellular location is the cell membrane. It carries out the reaction K(+)(in) = K(+)(out). The catalysed reaction is Na(+)(in) = Na(+)(out). In terms of biological role, upon acetylcholine binding, the AChR responds by an extensive change in conformation that affects all subunits and leads to opening of an ion-conducting channel across the plasma membrane. In Torpedo marmorata (Marbled electric ray), this protein is Acetylcholine receptor subunit alpha (CHRNA1).